The chain runs to 288 residues: Fructose-bisphosphate aldolase (288 aa).

S49 is a D-glyceraldehyde 3-phosphate binding site. D84 acts as the Proton donor in catalysis. The Zn(2+) site is built by H85, D105, E135, and H177. G178 provides a ligand contact to dihydroxyacetone phosphate. H206 is a Zn(2+) binding site. Dihydroxyacetone phosphate-binding positions include 207–209 (GGS) and 228–231 (NINT).

This sequence belongs to the class II fructose-bisphosphate aldolase family. As to quaternary structure, homodimer. Zn(2+) is required as a cofactor.

It catalyses the reaction beta-D-fructose 1,6-bisphosphate = D-glyceraldehyde 3-phosphate + dihydroxyacetone phosphate. It participates in carbohydrate degradation; glycolysis; D-glyceraldehyde 3-phosphate and glycerone phosphate from D-glucose: step 4/4. Catalyzes the aldol condensation of dihydroxyacetone phosphate (DHAP or glycerone-phosphate) with glyceraldehyde 3-phosphate (G3P) to form fructose 1,6-bisphosphate (FBP) in gluconeogenesis and the reverse reaction in glycolysis. This Mycoplasma genitalium (strain ATCC 33530 / DSM 19775 / NCTC 10195 / G37) (Mycoplasmoides genitalium) protein is Fructose-bisphosphate aldolase (fba).